Reading from the N-terminus, the 267-residue chain is Glucosamine-6-phosphate deaminase (267 aa).

The active-site Proton acceptor; for enolization step is the Asp76. Residue Asp145 is the For ring-opening step of the active site. His147 serves as the catalytic Proton acceptor; for ring-opening step. The For ring-opening step role is filled by Glu152.

The protein belongs to the glucosamine/galactosamine-6-phosphate isomerase family. In terms of assembly, homohexamer.

The protein resides in the cytoplasm. The catalysed reaction is alpha-D-glucosamine 6-phosphate + H2O = beta-D-fructose 6-phosphate + NH4(+). It functions in the pathway nucleotide-sugar biosynthesis; UDP-N-acetyl-alpha-D-glucosamine biosynthesis; alpha-D-glucosamine 6-phosphate from D-fructose 6-phosphate: step 1/1. In terms of biological role, catalyzes the reversible conversion of alpha-D-glucosamine 6-phosphate (GlcN-6P) into beta-D-fructose 6-phosphate (Fru-6P) and ammonium ion, a regulatory reaction step in de novo uridine diphosphate-N-acetyl-alpha-D-glucosamine (UDP-GlcNAc) biosynthesis via hexosamine pathway. This chain is Glucosamine-6-phosphate deaminase, found in Dictyostelium discoideum (Social amoeba).